We begin with the raw amino-acid sequence, 247 residues long: Pyridoxine 5'-phosphate synthase (247 aa).

Residue Asn-12 participates in 3-amino-2-oxopropyl phosphate binding. A 1-deoxy-D-xylulose 5-phosphate-binding site is contributed by 14–15 (DH). Arg-23 is a binding site for 3-amino-2-oxopropyl phosphate. His-48 (proton acceptor) is an active-site residue. 2 residues coordinate 1-deoxy-D-xylulose 5-phosphate: Arg-50 and His-55. Glu-75 serves as the catalytic Proton acceptor. Residue Thr-105 coordinates 1-deoxy-D-xylulose 5-phosphate. His-196 acts as the Proton donor in catalysis. 3-amino-2-oxopropyl phosphate is bound by residues Gly-197 and 218–219 (GH).

It belongs to the PNP synthase family. As to quaternary structure, homooctamer; tetramer of dimers.

It localises to the cytoplasm. The catalysed reaction is 3-amino-2-oxopropyl phosphate + 1-deoxy-D-xylulose 5-phosphate = pyridoxine 5'-phosphate + phosphate + 2 H2O + H(+). It participates in cofactor biosynthesis; pyridoxine 5'-phosphate biosynthesis; pyridoxine 5'-phosphate from D-erythrose 4-phosphate: step 5/5. In terms of biological role, catalyzes the complicated ring closure reaction between the two acyclic compounds 1-deoxy-D-xylulose-5-phosphate (DXP) and 3-amino-2-oxopropyl phosphate (1-amino-acetone-3-phosphate or AAP) to form pyridoxine 5'-phosphate (PNP) and inorganic phosphate. The polypeptide is Pyridoxine 5'-phosphate synthase (Pseudomonas fluorescens (strain SBW25)).